The following is a 428-amino-acid chain: Gamma-glutamyl phosphate reductase (428 aa).

Belongs to the gamma-glutamyl phosphate reductase family.

The protein localises to the cytoplasm. It catalyses the reaction L-glutamate 5-semialdehyde + phosphate + NADP(+) = L-glutamyl 5-phosphate + NADPH + H(+). The protein operates within amino-acid biosynthesis; L-proline biosynthesis; L-glutamate 5-semialdehyde from L-glutamate: step 2/2. Its function is as follows. Catalyzes the NADPH-dependent reduction of L-glutamate 5-phosphate into L-glutamate 5-semialdehyde and phosphate. The product spontaneously undergoes cyclization to form 1-pyrroline-5-carboxylate. The protein is Gamma-glutamyl phosphate reductase of Agrobacterium fabrum (strain C58 / ATCC 33970) (Agrobacterium tumefaciens (strain C58)).